Consider the following 130-residue polypeptide: 3-aminoacrylate deaminase RutC (130 aa).

This sequence belongs to the RutC family.

The catalysed reaction is (Z)-3-aminoacrylate + H2O + H(+) = 3-oxopropanoate + NH4(+). In terms of biological role, involved in pyrimidine catabolism. Catalyzes the deamination of 3-aminoacrylate to malonic semialdehyde, a reaction that can also occur spontaneously. RutC may facilitate the reaction and modulate the metabolic fitness, rather than catalyzing essential functions. In Variovorax paradoxus (strain S110), this protein is 3-aminoacrylate deaminase RutC.